The sequence spans 569 residues: MPFKISRQAYAETYGPTKGDRIRLADTDLILEVEQDHTHYGDEVKFGGGKVIRDGMGQSQQSRDNGVVDTVITNALILDWWGIVKADIGIKDGKISGIGKAGNPDTQEGVNIIVGASTEAIAGEGSIITAGAIDSHIHFICPQQIETALASGVTTMLGGGTGPATGTNATTCTPGAFHISRMLQSAEGFPVNLGFFGKGNATNKAALEEQVRAGACGLKLHEDWGTTPACIDSCLSVADQLDVQVCIHTDTLNEAGFVEDTIKAIRGRTIHTFHTEGAGGGHAPDIIKICGESNVIPSSTNPTRPFTLNTLEEHLDMLMVCHHLDPKIPEDVAFAESRIRRETIAAEDILHDLGAFSIIASDSQAMGRVGEVISRTFQTAHKMKVQRGALPEDNQRNDNHRLKRYISKVTINPAIAHGISAHVGSVEVGKLADLVLWKPGFFGIKPDLVVKGGCIAWAQMGDANASIPTPQPVHGRPMFSSFGKAINPTCLTFLSESAIDAGVPERLKLERSYAPVKDTRKISKQSMKLNDARPKIEVDPQTYEVFANGELLTCEPAELLPLAQRYLLL.

Positions glycine 131–leucine 569 constitute a Urease domain. Residues histidine 136, histidine 138, and lysine 219 each coordinate Ni(2+). An N6-carboxylysine modification is found at lysine 219. Histidine 221 is a binding site for substrate. Residues histidine 248 and histidine 274 each coordinate Ni(2+). Histidine 322 acts as the Proton donor in catalysis. Aspartate 362 is a Ni(2+) binding site.

The protein belongs to the metallo-dependent hydrolases superfamily. Urease alpha subunit family. As to quaternary structure, heterotrimer of UreA (gamma), UreB (beta) and UreC (alpha) subunits. Three heterotrimers associate to form the active enzyme. The cofactor is Ni cation. In terms of processing, carboxylation allows a single lysine to coordinate two nickel ions.

Its subcellular location is the cytoplasm. It carries out the reaction urea + 2 H2O + H(+) = hydrogencarbonate + 2 NH4(+). The protein operates within nitrogen metabolism; urea degradation; CO(2) and NH(3) from urea (urease route): step 1/1. In Prochlorococcus marinus (strain NATL2A), this protein is Urease subunit alpha.